A 124-amino-acid polypeptide reads, in one-letter code: Small ribosomal subunit protein uS12c (124 aa).

The protein belongs to the universal ribosomal protein uS12 family. Part of the 30S ribosomal subunit.

It is found in the plastid. The protein localises to the chloroplast. Functionally, with S4 and S5 plays an important role in translational accuracy. Located at the interface of the 30S and 50S subunits. The sequence is that of Small ribosomal subunit protein uS12c (rps12) from Cyanidium caldarium (Red alga).